The primary structure comprises 92 residues: Small ribosomal subunit protein uS19 (92 aa).

It belongs to the universal ribosomal protein uS19 family.

In terms of biological role, protein S19 forms a complex with S13 that binds strongly to the 16S ribosomal RNA. In Paracidovorax citrulli (strain AAC00-1) (Acidovorax citrulli), this protein is Small ribosomal subunit protein uS19.